A 167-amino-acid chain; its full sequence is Biotin carboxyl carrier protein of acetyl-CoA carboxylase (167 aa).

Residues 53 to 91 (SGFSQERPIPTDPKKDTIKETTTENSETSTTTSSGDFIS) form a disordered region. Residues 64–74 (DPKKDTIKETT) are compositionally biased toward basic and acidic residues. The segment covering 75–86 (TENSETSTTTSS) has biased composition (low complexity). The Biotinyl-binding domain maps to 87–163 (GDFISSPLVG…QFGSKLFRIA (77 aa)). At Lys129 the chain carries N6-biotinyllysine.

As to quaternary structure, homodimer.

It functions in the pathway lipid metabolism; fatty acid biosynthesis. This protein is a component of the acetyl coenzyme A carboxylase complex; first, biotin carboxylase catalyzes the carboxylation of the carrier protein and then the transcarboxylase transfers the carboxyl group to form malonyl-CoA. This is Biotin carboxyl carrier protein of acetyl-CoA carboxylase (accB) from Chlamydia pneumoniae (Chlamydophila pneumoniae).